Consider the following 330-residue polypeptide: 5'-AMP-activated protein kinase subunit gamma-1 (330 aa).

Residues 1–13 (METVTSSDSSSAV) show a composition bias toward polar residues. Residues 1–26 (METVTSSDSSSAVENEHPQDTPESNN) form a disordered region. 3 consecutive CBS domains span residues 43-103 (PTSS…KSAL), 125-187 (SFKP…PKPE), and 198-260 (IGTY…NLDV). Residues Arg70, 85–90 (MLTITD), Val130, 151–152 (HR), and Lys170 each bind ADP. Residues Arg70, 85–90 (MLTITD), Val130, His151, 151–152 (HR), Lys170, Thr200, Ala205, 226–227 (SA), and 242–245 (SKFD) contribute to the AMP site. Residues Arg70, 85–90 (MLTITD), Val130, 151–152 (HR), Arg152, and Lys170 contribute to the ATP site. An AMPK pseudosubstrate motif is present at residues 138-159 (LFDAVSSLIRNKIHRLPVIDPE). 242-245 (SKFD) serves as a coordination point for ADP. 242–245 (SKFD) provides a ligand contact to ATP. Position 261 is a phosphoserine; by ULK1 (Ser261). Thr263 carries the phosphothreonine; by ULK1 modification. Residue Arg269 coordinates ADP. Arg269 is an AMP binding site. Arg269 contributes to the ATP binding site. Ser270 carries the post-translational modification Phosphoserine; by ULK1. Residues 272–329 (YFEGVLKCYLHETLETIINRLVEAEVHRLVVVDENDVVKGIVSLSDILQALVLTGGEK) form the CBS 4 domain. Residues Leu277 and 298–299 (HR) each bind ADP. AMP is bound by residues Leu277, His298, 298-299 (HR), and 314-317 (SLSD). Residues Leu277 and 298–299 (HR) each bind ATP.

The protein belongs to the 5'-AMP-activated protein kinase gamma subunit family. AMPK is a heterotrimer of an alpha catalytic subunit (PRKAA1 or PRKAA2), a beta (PRKAB1 or PRKAB2) and a gamma non-catalytic subunits (PRKAG1, PRKAG2 or PRKAG3). Interacts with FNIP1 and FNIP2. Post-translationally, phosphorylated by ULK1 and ULK2; leading to negatively regulate AMPK activity and suggesting the existence of a regulatory feedback loop between ULK1, ULK2 and AMPK. Glycosylated; O-GlcNAcylated by OGT, promoting the AMP-activated protein kinase (AMPK) activity.

Functionally, AMP/ATP-binding subunit of AMP-activated protein kinase (AMPK), an energy sensor protein kinase that plays a key role in regulating cellular energy metabolism. In response to reduction of intracellular ATP levels, AMPK activates energy-producing pathways and inhibits energy-consuming processes: inhibits protein, carbohydrate and lipid biosynthesis, as well as cell growth and proliferation. AMPK acts via direct phosphorylation of metabolic enzymes, and by longer-term effects via phosphorylation of transcription regulators. Also acts as a regulator of cellular polarity by remodeling the actin cytoskeleton; probably by indirectly activating myosin. Gamma non-catalytic subunit mediates binding to AMP, ADP and ATP, leading to activate or inhibit AMPK: AMP-binding results in allosteric activation of alpha catalytic subunit (PRKAA1 or PRKAA2) both by inducing phosphorylation and preventing dephosphorylation of catalytic subunits. ADP also stimulates phosphorylation, without stimulating already phosphorylated catalytic subunit. ATP promotes dephosphorylation of catalytic subunit, rendering the AMPK enzyme inactive. This Sus scrofa (Pig) protein is 5'-AMP-activated protein kinase subunit gamma-1 (PRKAG1).